We begin with the raw amino-acid sequence, 87 residues long: Large ribosomal subunit protein bL27 (87 aa).

The disordered stretch occupies residues 1 to 22 (MAHKKAGGSSRNGRDSQGQRRG).

This sequence belongs to the bacterial ribosomal protein bL27 family.

The chain is Large ribosomal subunit protein bL27 from Nitratidesulfovibrio vulgaris (strain DP4) (Desulfovibrio vulgaris).